Consider the following 389-residue polypeptide: Chorismate synthase (389 aa).

NADP(+)-binding residues include Arg40 and Arg46. FMN contacts are provided by residues 131–133 (RSS), 252–253 (NA), Gly297, 312–316 (KPIPT), and Arg338.

This sequence belongs to the chorismate synthase family. Homotetramer. Requires FMNH2 as cofactor.

The catalysed reaction is 5-O-(1-carboxyvinyl)-3-phosphoshikimate = chorismate + phosphate. It functions in the pathway metabolic intermediate biosynthesis; chorismate biosynthesis; chorismate from D-erythrose 4-phosphate and phosphoenolpyruvate: step 7/7. Its function is as follows. Catalyzes the anti-1,4-elimination of the C-3 phosphate and the C-6 proR hydrogen from 5-enolpyruvylshikimate-3-phosphate (EPSP) to yield chorismate, which is the branch point compound that serves as the starting substrate for the three terminal pathways of aromatic amino acid biosynthesis. This reaction introduces a second double bond into the aromatic ring system. This is Chorismate synthase from Lactiplantibacillus plantarum (strain ATCC BAA-793 / NCIMB 8826 / WCFS1) (Lactobacillus plantarum).